Consider the following 284-residue polypeptide: Formyltetrahydrofolate deformylase (284 aa).

Residues Thr-7–Arg-90 enclose the ACT domain. Residue Asp-228 is part of the active site.

This sequence belongs to the PurU family.

It carries out the reaction (6R)-10-formyltetrahydrofolate + H2O = (6S)-5,6,7,8-tetrahydrofolate + formate + H(+). It functions in the pathway purine metabolism; IMP biosynthesis via de novo pathway; formate from 10-formyl-5,6,7,8-tetrahydrofolate: step 1/1. Its function is as follows. Catalyzes the hydrolysis of 10-formyltetrahydrofolate (formyl-FH4) to formate and tetrahydrofolate (FH4). The polypeptide is Formyltetrahydrofolate deformylase (Synechocystis sp. (strain ATCC 27184 / PCC 6803 / Kazusa)).